The chain runs to 144 residues: Small ribosomal subunit protein eS19A (144 aa).

The segment at 83 to 102 (VNRGMRPSHHRDGSGSVQRK) is disordered.

The protein belongs to the eukaryotic ribosomal protein eS19 family. In terms of assembly, component of the small ribosomal subunit (SSU). Mature yeast ribosomes consist of a small (40S) and a large (60S) subunit. The 40S small subunit contains 1 molecule of ribosomal RNA (18S rRNA) and at least 33 different proteins. The large 60S subunit contains 3 rRNA molecules (25S, 5.8S and 5S rRNA) and at least 46 different proteins.

Its subcellular location is the cytoplasm. The protein localises to the nucleus. The protein resides in the nucleolus. Functionally, component of the ribosome, a large ribonucleoprotein complex responsible for the synthesis of proteins in the cell. The small ribosomal subunit (SSU) binds messenger RNAs (mRNAs) and translates the encoded message by selecting cognate aminoacyl-transfer RNA (tRNA) molecules. The large subunit (LSU) contains the ribosomal catalytic site termed the peptidyl transferase center (PTC), which catalyzes the formation of peptide bonds, thereby polymerizing the amino acids delivered by tRNAs into a polypeptide chain. The nascent polypeptides leave the ribosome through a tunnel in the LSU and interact with protein factors that function in enzymatic processing, targeting, and the membrane insertion of nascent chains at the exit of the ribosomal tunnel. eS19 is required for proper maturation of the small (40S) ribosomal subunit. Binds to 40S pre-ribosomal particles, probably required after association of NOC4 but before association of ENP1, TSR1 and RIO2 with 20/21S pre-rRNA. The sequence is that of Small ribosomal subunit protein eS19A (rps1901) from Schizosaccharomyces pombe (strain 972 / ATCC 24843) (Fission yeast).